The primary structure comprises 151 residues: 6,7-dimethyl-8-ribityllumazine synthase (151 aa).

5-amino-6-(D-ribitylamino)uracil-binding positions include F23, 55-57 (AYE), and 79-81 (AVI). 84–85 (AT) provides a ligand contact to (2S)-2-hydroxy-3-oxobutyl phosphate. The active-site Proton donor is the H87. Residue F111 participates in 5-amino-6-(D-ribitylamino)uracil binding. R125 is a binding site for (2S)-2-hydroxy-3-oxobutyl phosphate.

Belongs to the DMRL synthase family.

It catalyses the reaction (2S)-2-hydroxy-3-oxobutyl phosphate + 5-amino-6-(D-ribitylamino)uracil = 6,7-dimethyl-8-(1-D-ribityl)lumazine + phosphate + 2 H2O + H(+). Its pathway is cofactor biosynthesis; riboflavin biosynthesis; riboflavin from 2-hydroxy-3-oxobutyl phosphate and 5-amino-6-(D-ribitylamino)uracil: step 1/2. Functionally, catalyzes the formation of 6,7-dimethyl-8-ribityllumazine by condensation of 5-amino-6-(D-ribitylamino)uracil with 3,4-dihydroxy-2-butanone 4-phosphate. This is the penultimate step in the biosynthesis of riboflavin. The protein is 6,7-dimethyl-8-ribityllumazine synthase of Leptospira interrogans serogroup Icterohaemorrhagiae serovar copenhageni (strain Fiocruz L1-130).